Consider the following 272-residue polypeptide: Putative MgpC-like protein MPN_102 (272 aa).

The protein belongs to the MgpC family.

The chain is Putative MgpC-like protein MPN_102 from Mycoplasma pneumoniae (strain ATCC 29342 / M129 / Subtype 1) (Mycoplasmoides pneumoniae).